The chain runs to 121 residues: Large ribosomal subunit protein bL12 (121 aa).

This sequence belongs to the bacterial ribosomal protein bL12 family. Homodimer. Part of the ribosomal stalk of the 50S ribosomal subunit. Forms a multimeric L10(L12)X complex, where L10 forms an elongated spine to which 2 to 4 L12 dimers bind in a sequential fashion. Binds GTP-bound translation factors.

In terms of biological role, forms part of the ribosomal stalk which helps the ribosome interact with GTP-bound translation factors. Is thus essential for accurate translation. This is Large ribosomal subunit protein bL12 from Streptococcus agalactiae serotype Ia (strain ATCC 27591 / A909 / CDC SS700).